A 206-amino-acid polypeptide reads, in one-letter code: MAAARCLRWGLSRAEAWLLPPPTSCCHRALHRQVEGTEFRSAYSLDKLYPESRGADTAWRVPGDAKQGNDDIPVDRLTISYCRSSGPGGQNVNKVNSKAEVRFHLASADWIAEPVRQKMALTHKNKINRAGELILTSEYSRYQFRNLADCLQKIRDMIAEASQPATEPSKEDAALQKLRIENMNRERLRKKRINSAIKTSRRVGTD.

The N-terminal 29 residues, 1-29, are a transit peptide targeting the mitochondrion; that stretch reads MAAARCLRWGLSRAEAWLLPPPTSCCHRA. Position 90 is an N5-methylglutamine (Gln-90).

The protein belongs to the prokaryotic/mitochondrial release factor family. Mitochondrion-specific ribosomal protein mL62 subfamily. Component of the mitochondrial ribosome large subunit (39S) which comprises a 16S rRNA and about 50 distinct proteins. In terms of processing, methylation of glutamine in the GGQ triplet by HEMK1.

The protein resides in the mitochondrion. It catalyses the reaction an N-acyl-L-alpha-aminoacyl-tRNA + H2O = an N-acyl-L-amino acid + a tRNA + H(+). Essential peptidyl-tRNA hydrolase component of the mitochondrial large ribosomal subunit. Acts as a codon-independent translation release factor that has lost all stop codon specificity and directs the termination of translation in mitochondrion, possibly in case of abortive elongation. May be involved in the hydrolysis of peptidyl-tRNAs that have been prematurely terminated and thus in the recycling of stalled mitochondrial ribosomes. This Bos taurus (Bovine) protein is Large ribosomal subunit protein mL62.